The chain runs to 320 residues: Small ribosomal subunit protein mS35 (320 aa).

The interval 24–63 (SVASPAAPRAGPRTASRSERPMRRKALPPRTEKMDTDQDW) is disordered.

It belongs to the mitochondrion-specific ribosomal protein mS35 family. In terms of assembly, component of the mitochondrial ribosome small subunit (28S) which comprises a 12S rRNA and about 30 distinct proteins.

The protein localises to the mitochondrion. This chain is Small ribosomal subunit protein mS35, found in Mus musculus (Mouse).